The chain runs to 442 residues: MKKVFIRTFGCQMNEYDSEKMLSVLAEEHGGIEQVTQADEADIILFNTCSVREKAQEKVFSDLGRVRPLKEKNPGLIIGVAGCVASQEGENIIKRAPYVDVVFGPQTLHRLPKMIVDKETSGLSQVDISFPEIEKFDHLPPARVEGGAAFVSIMEGCSKYCSFCVVPYTRGEEFSRPLNDVLTEIANLAQQGVKEINLLGQNVNAYRGEMDDGEICDFATLLRIVHEIPGIERMRFTTSHPREFTDSIIECYRDLPKLVSHLHLPIQSGSDRVLSAMKRGYTALEYKSIIRKLRAIRPDLCLSSDFIVGFPGETEREFEQTLKLVKDIAFDLSFVFIYSPRPGTPAANLPDDTPHEEKVRRLEALNEVIEAETARINQTMIGTVQRCLVEGISKKDPDQLQARTANNRVVNFTGTPDMINQMIDLEITEAYTFSLRGKIVEA.

Positions 2 to 120 constitute an MTTase N-terminal domain; sequence KKVFIRTFGC…LPKMIVDKET (119 aa). Residues C11, C49, C83, C157, C161, and C164 each contribute to the [4Fe-4S] cluster site. Residues 143–375 form the Radical SAM core domain; the sequence is RVEGGAAFVS…NEVIEAETAR (233 aa). The TRAM domain maps to 378–441; that stretch reads QTMIGTVQRC…TFSLRGKIVE (64 aa).

Belongs to the methylthiotransferase family. MiaB subfamily. Monomer. It depends on [4Fe-4S] cluster as a cofactor.

Its subcellular location is the cytoplasm. The catalysed reaction is N(6)-dimethylallyladenosine(37) in tRNA + (sulfur carrier)-SH + AH2 + 2 S-adenosyl-L-methionine = 2-methylsulfanyl-N(6)-dimethylallyladenosine(37) in tRNA + (sulfur carrier)-H + 5'-deoxyadenosine + L-methionine + A + S-adenosyl-L-homocysteine + 2 H(+). Functionally, catalyzes the methylthiolation of N6-(dimethylallyl)adenosine (i(6)A), leading to the formation of 2-methylthio-N6-(dimethylallyl)adenosine (ms(2)i(6)A) at position 37 in tRNAs that read codons beginning with uridine. This is tRNA-2-methylthio-N(6)-dimethylallyladenosine synthase from Neisseria gonorrhoeae (strain NCCP11945).